The sequence spans 91 residues: Large ribosomal subunit protein bL31B (91 aa).

This sequence belongs to the bacterial ribosomal protein bL31 family. Type B subfamily. In terms of assembly, part of the 50S ribosomal subunit.

This is Large ribosomal subunit protein bL31B from Neisseria gonorrhoeae (strain ATCC 700825 / FA 1090).